Consider the following 504-residue polypeptide: Glycerol kinase (504 aa).

Thr-12 contributes to the ADP binding site. ATP-binding residues include Thr-12, Thr-13, and Ser-14. A sn-glycerol 3-phosphate-binding site is contributed by Thr-12. ADP is bound at residue Arg-16. Residues Arg-82, Glu-83, Tyr-134, and Asp-244 each contribute to the sn-glycerol 3-phosphate site. Residues Arg-82, Glu-83, Tyr-134, Asp-244, and Gln-245 each coordinate glycerol. ADP contacts are provided by Thr-266 and Gly-309. 4 residues coordinate ATP: Thr-266, Gly-309, Gln-313, and Gly-410. ADP contacts are provided by Gly-410 and Asn-414.

The protein belongs to the FGGY kinase family. As to quaternary structure, homotetramer and homodimer (in equilibrium).

It carries out the reaction glycerol + ATP = sn-glycerol 3-phosphate + ADP + H(+). The protein operates within polyol metabolism; glycerol degradation via glycerol kinase pathway; sn-glycerol 3-phosphate from glycerol: step 1/1. Activated by phosphorylation and inhibited by fructose 1,6-bisphosphate (FBP). In terms of biological role, key enzyme in the regulation of glycerol uptake and metabolism. Catalyzes the phosphorylation of glycerol to yield sn-glycerol 3-phosphate. The polypeptide is Glycerol kinase (Alkaliphilus oremlandii (strain OhILAs) (Clostridium oremlandii (strain OhILAs))).